Reading from the N-terminus, the 565-residue chain is Zinc finger protein 512 (565 aa).

The interval 1–30 (MSSRLGAVPATSGPTTFKQQRSTRIVGAKN) is disordered. Residues 12–23 (SGPTTFKQQRST) are compositionally biased toward polar residues. Glycyl lysine isopeptide (Lys-Gly) (interchain with G-Cter in SUMO2) cross-links involve residues lysine 18 and lysine 83. A disordered region spans residues 85–147 (AATSHVEGSG…QARRIRKEPP (63 aa)). Positions 118 to 129 (KKHKLYGRKQRP) are enriched in basic residues. The C2H2-type 1 zinc-finger motif lies at 196–219 (FTCHHCGKQLRSLAGMKYHVMANH). Lysine 226 is covalently cross-linked (Glycyl lysine isopeptide (Lys-Gly) (interchain with G-Cter in SUMO2)). The segment at 286–309 (LKCHHCGKPYRSKAGLAYHLRSEH) adopts a C2H2-type 2 zinc-finger fold. Residue lysine 332 forms a Glycyl lysine isopeptide (Lys-Gly) (interchain with G-Cter in SUMO2) linkage. A C2H2-type 3; atypical zinc finger spans residues 405–429 (IQCPNQGCEAVYSSVSGLKAHLGSC). The C2H2-type 4 zinc finger occupies 439 to 462 (YKCLLCQKEFVSESGVKYHINSVH). Positions 484-493 (KQRQQEEEKR) are enriched in basic and acidic residues. The tract at residues 484-565 (KQRQQEEEKR…PKTNHKRGRK (82 aa)) is disordered. Over residues 494–507 (RQQHRSRRSLRRRQ) the composition is skewed to basic residues. Basic and acidic residues predominate over residues 522-531 (VGKDQRRNEE). Positions 554–565 (KPPKTNHKRGRK) are enriched in basic residues.

Belongs to the krueppel C2H2-type zinc-finger protein family.

It is found in the nucleus. May be involved in transcriptional regulation. In Macaca fascicularis (Crab-eating macaque), this protein is Zinc finger protein 512 (ZNF512).